The following is a 259-amino-acid chain: MATIKEIKELLVTVKELESPIFLELEKDNRSGVQKEISKRKRAIQAELDENLRLESMLSYEKELYKQGLTLIAGIDEVGRGPLAGPVVAAAVILPKNCKIKGLNDSKKIPKKKHLEIFQAVQDQALSIGIGIIDNQVIDQVNIYEATKLAMQEAISQLSPQPEHLLIDAMKLDLPISQTSIIKGDANSLSIAAASIVAKVTRDELMKEYDQQFPGYDFATNAGYGTAKHLEGLTKLGATPIHRTSFEPVKSLVLGKKES.

The RNase H type-2 domain occupies 70–258 (TLIAGIDEVG…VKSLVLGKKE (189 aa)). A divalent metal cation is bound by residues D76, E77, and D168.

It belongs to the RNase HII family. It depends on Mn(2+) as a cofactor. Requires Mg(2+) as cofactor.

It is found in the cytoplasm. It catalyses the reaction Endonucleolytic cleavage to 5'-phosphomonoester.. Its function is as follows. Endonuclease that specifically degrades the RNA of RNA-DNA hybrids. This is Ribonuclease HII from Streptococcus pneumoniae (strain Hungary19A-6).